The sequence spans 134 residues: Profilin-3 (134 aa).

Residues C13 and C118 are joined by a disulfide bond. Residues 84-100 carry the Involved in PIP2 interaction motif; the sequence is AVIRGKKGSGGITIKKT. T114 bears the Phosphothreonine mark.

It belongs to the profilin family. Occurs in many kinds of cells as a complex with monomeric actin in a 1:1 ratio. Post-translationally, phosphorylated by MAP kinases.

Its subcellular location is the cytoplasm. It localises to the cytoskeleton. Functionally, binds to actin and affects the structure of the cytoskeleton. At high concentrations, profilin prevents the polymerization of actin, whereas it enhances it at low concentrations. The protein is Profilin-3 of Olea europaea (Common olive).